The primary structure comprises 483 residues: Aspartyl/glutamyl-tRNA(Asn/Gln) amidotransferase subunit B (483 aa).

Belongs to the GatB/GatE family. GatB subfamily. In terms of assembly, heterotrimer of A, B and C subunits.

The catalysed reaction is L-glutamyl-tRNA(Gln) + L-glutamine + ATP + H2O = L-glutaminyl-tRNA(Gln) + L-glutamate + ADP + phosphate + H(+). It carries out the reaction L-aspartyl-tRNA(Asn) + L-glutamine + ATP + H2O = L-asparaginyl-tRNA(Asn) + L-glutamate + ADP + phosphate + 2 H(+). Allows the formation of correctly charged Asn-tRNA(Asn) or Gln-tRNA(Gln) through the transamidation of misacylated Asp-tRNA(Asn) or Glu-tRNA(Gln) in organisms which lack either or both of asparaginyl-tRNA or glutaminyl-tRNA synthetases. The reaction takes place in the presence of glutamine and ATP through an activated phospho-Asp-tRNA(Asn) or phospho-Glu-tRNA(Gln). This Lachnospira eligens (strain ATCC 27750 / DSM 3376 / VPI C15-48 / C15-B4) (Eubacterium eligens) protein is Aspartyl/glutamyl-tRNA(Asn/Gln) amidotransferase subunit B.